Reading from the N-terminus, the 416-residue chain is NADH-quinone oxidoreductase subunit H (416 aa).

9 helical membrane passes run 16–36 (LILA…LAAI), 84–104 (PVYL…FAVI), 124–144 (LAVA…GIVL), 165–185 (VVSY…YAGT), 197–217 (STWY…SMVG), 260–280 (VSAL…PISL), 288–308 (WWPL…YIWL), 320–340 (FMAI…MIVA), and 353–373 (WASG…VVLW).

It belongs to the complex I subunit 1 family. NDH-1 is composed of 14 different subunits. Subunits NuoA, H, J, K, L, M, N constitute the membrane sector of the complex.

It localises to the cell membrane. It catalyses the reaction a quinone + NADH + 5 H(+)(in) = a quinol + NAD(+) + 4 H(+)(out). Functionally, NDH-1 shuttles electrons from NADH, via FMN and iron-sulfur (Fe-S) centers, to quinones in the respiratory chain. The immediate electron acceptor for the enzyme in this species is believed to be menaquinone. Couples the redox reaction to proton translocation (for every two electrons transferred, four hydrogen ions are translocated across the cytoplasmic membrane), and thus conserves the redox energy in a proton gradient. This subunit may bind ubiquinone. The sequence is that of NADH-quinone oxidoreductase subunit H from Mycobacterium sp. (strain JLS).